A 591-amino-acid polypeptide reads, in one-letter code: Aspartate--tRNA ligase (591 aa).

E173 provides a ligand contact to L-aspartate. Residues 197-200 (QLFK) form an aspartate region. R219 contacts L-aspartate. Residues 219–221 (RDE) and Q228 each bind ATP. H446 lines the L-aspartate pocket. E482 serves as a coordination point for ATP. R489 contacts L-aspartate. Residue 534–537 (GLDR) participates in ATP binding.

It belongs to the class-II aminoacyl-tRNA synthetase family. Type 1 subfamily. Homodimer.

It is found in the cytoplasm. The enzyme catalyses tRNA(Asp) + L-aspartate + ATP = L-aspartyl-tRNA(Asp) + AMP + diphosphate. Its function is as follows. Catalyzes the attachment of L-aspartate to tRNA(Asp) in a two-step reaction: L-aspartate is first activated by ATP to form Asp-AMP and then transferred to the acceptor end of tRNA(Asp). In Limosilactobacillus fermentum (strain NBRC 3956 / LMG 18251) (Lactobacillus fermentum), this protein is Aspartate--tRNA ligase.